Consider the following 164-residue polypeptide: MRPRKRRMVDFEHPERQFRPFSPESEISEEILLTIDELEAMRLSFLENLSQTEAAARMEIHQSTFQRALKKALEKVTDALVHGKAIRIEGGDYRMPRGDRTGPAGQGPAGGGRGRGQGKGRGGRFGGPEGNCICTACGYETPHTPGVSCSQVKCEKCGSPMVRK.

Positions 91-100 (GDYRMPRGDR) are enriched in basic and acidic residues. The tract at residues 91–123 (GDYRMPRGDRTGPAGQGPAGGGRGRGQGKGRGG) is disordered. A compositionally biased stretch (gly residues) spans 104–115 (AGQGPAGGGRGR).

It belongs to the UPF0251 family.

This is UPF0251 protein MM_1448 from Methanosarcina mazei (strain ATCC BAA-159 / DSM 3647 / Goe1 / Go1 / JCM 11833 / OCM 88) (Methanosarcina frisia).